The sequence spans 92 residues: Kinetoplastid membrane protein 11B (92 aa).

Belongs to the KMP-11 family. In terms of assembly, monomer.

The protein resides in the cytoplasm. It is found in the cytoskeleton. Its subcellular location is the cell projection. The protein localises to the cilium. It localises to the flagellum. Functionally, may be involved in the regulation of the cytoskeleton through interaction with the subpellicular microtubules. May be involved in parasite mobility and attachment to the surface of the host cell. Behaves as a strong immunogen during infection. This chain is Kinetoplastid membrane protein 11B (KMP-11B), found in Leishmania infantum.